The chain runs to 473 residues: Photosystem II CP43 reaction center protein (473 aa).

Positions 1 to 14 are excised as a propeptide; that stretch reads MKILYSLRRFYHVE. An N-acetylthreonine modification is found at Thr-15. Residue Thr-15 is modified to Phosphothreonine. 5 helical membrane-spanning segments follow: residues 69–93, 134–155, 178–200, 255–275, and 291–312; these read LFEVAHFVPEKPMYEQGLILLPHLA, LLGPETLEESFPFFGYVWKDRN, KALYFGGVYDTWAPGGGDVRKIT, KPFAWARRAFVWSGEAYLSYS, and WFNNTAYPSEFYGPTGPEASQA. Glu-367 contributes to the [CaMn4O5] cluster binding site. A helical membrane pass occupies residues 447–471; the sequence is RARAAAAGFEKGIDRDLEPVLYMTP.

It belongs to the PsbB/PsbC family. PsbC subfamily. As to quaternary structure, PSII is composed of 1 copy each of membrane proteins PsbA, PsbB, PsbC, PsbD, PsbE, PsbF, PsbH, PsbI, PsbJ, PsbK, PsbL, PsbM, PsbT, PsbX, PsbY, PsbZ, Psb30/Ycf12, at least 3 peripheral proteins of the oxygen-evolving complex and a large number of cofactors. It forms dimeric complexes. Requires Binds multiple chlorophylls and provides some of the ligands for the Ca-4Mn-5O cluster of the oxygen-evolving complex. It may also provide a ligand for a Cl- that is required for oxygen evolution. PSII binds additional chlorophylls, carotenoids and specific lipids. as cofactor.

The protein localises to the plastid. The protein resides in the chloroplast thylakoid membrane. Functionally, one of the components of the core complex of photosystem II (PSII). It binds chlorophyll and helps catalyze the primary light-induced photochemical processes of PSII. PSII is a light-driven water:plastoquinone oxidoreductase, using light energy to abstract electrons from H(2)O, generating O(2) and a proton gradient subsequently used for ATP formation. The chain is Photosystem II CP43 reaction center protein from Saccharum hybrid (Sugarcane).